The sequence spans 412 residues: Short-chain specific acyl-CoA dehydrogenase, mitochondrial (412 aa).

The transit peptide at 1–24 directs the protein to the mitochondrion; the sequence is MAAALLARAGGSLGRALRARDWRR. Thr27 carries the phosphothreonine modification. Lys51 carries the N6-acetyllysine; alternate modification. At Lys51 the chain carries N6-succinyllysine; alternate. Lys72 is subject to N6-acetyllysine. Lys129 bears the N6-acetyllysine; alternate mark. Lys129 bears the N6-succinyllysine; alternate mark. Residues 152–161 and 185–187 contribute to the FAD site; these read FALSEPGNGS and WIT. Ser161 lines the substrate pocket. Lys208 carries the N6-acetyllysine modification. Lys262 is modified (N6-acetyllysine; alternate). N6-succinyllysine; alternate is present on Lys262. A substrate-binding site is contributed by 269–272; it reads DMGR. Lys292 is modified (N6-acetyllysine). Arg297 serves as a coordination point for FAD. Lys306 bears the N6-acetyllysine; alternate mark. Lys306 bears the N6-succinyllysine; alternate mark. 365 to 369 is an FAD binding site; sequence QILGG. The active-site Proton acceptor is the Glu392. 394–396 serves as a coordination point for FAD; it reads TSE.

Belongs to the acyl-CoA dehydrogenase family. In terms of assembly, homotetramer. FAD serves as cofactor.

Its subcellular location is the mitochondrion matrix. The enzyme catalyses a short-chain 2,3-saturated fatty acyl-CoA + oxidized [electron-transfer flavoprotein] + H(+) = a short-chain (2E)-enoyl-CoA + reduced [electron-transfer flavoprotein]. The catalysed reaction is butanoyl-CoA + oxidized [electron-transfer flavoprotein] + H(+) = (2E)-butenoyl-CoA + reduced [electron-transfer flavoprotein]. It carries out the reaction pentanoyl-CoA + oxidized [electron-transfer flavoprotein] + H(+) = (2E)-pentenoyl-CoA + reduced [electron-transfer flavoprotein]. It catalyses the reaction hexanoyl-CoA + oxidized [electron-transfer flavoprotein] + H(+) = (2E)-hexenoyl-CoA + reduced [electron-transfer flavoprotein]. It participates in lipid metabolism; mitochondrial fatty acid beta-oxidation. Functionally, short-chain specific acyl-CoA dehydrogenase is one of the acyl-CoA dehydrogenases that catalyze the first step of mitochondrial fatty acid beta-oxidation, an aerobic process breaking down fatty acids into acetyl-CoA and allowing the production of energy from fats. The first step of fatty acid beta-oxidation consists in the removal of one hydrogen from C-2 and C-3 of the straight-chain fatty acyl-CoA thioester, resulting in the formation of trans-2-enoyl-CoA. Among the different mitochondrial acyl-CoA dehydrogenases, short-chain specific acyl-CoA dehydrogenase acts specifically on acyl-CoAs with saturated 4 to 6 carbons long primary chains. This chain is Short-chain specific acyl-CoA dehydrogenase, mitochondrial (Acads), found in Rattus norvegicus (Rat).